The following is a 397-amino-acid chain: Lipoyl synthase 2, chloroplastic (397 aa).

Residues 1 to 35 constitute a chloroplast transit peptide; it reads MIEQSLSKPSFSLSIPIPKAPKSKSSFFCSYSKIR. The disordered stretch occupies residues 49–85; that stretch reads AKHPQNSTTINNGSSSSASVDLKNNEKGPYPYPGGGK. Residues 54-67 are compositionally biased toward low complexity; it reads NSTTINNGSSSSAS. The [4Fe-4S] cluster site is built by Cys128, Cys133, Cys139, Cys159, Cys163, Cys166, and Ser374. Residues 142–363 form the Radical SAM core domain; it reads GGGDGIATAT…KEYGESIGFR (222 aa).

Belongs to the radical SAM superfamily. Lipoyl synthase family. The cofactor is [4Fe-4S] cluster.

It is found in the plastid. Its subcellular location is the chloroplast. The enzyme catalyses [[Fe-S] cluster scaffold protein carrying a second [4Fe-4S](2+) cluster] + N(6)-octanoyl-L-lysyl-[protein] + 2 oxidized [2Fe-2S]-[ferredoxin] + 2 S-adenosyl-L-methionine + 4 H(+) = [[Fe-S] cluster scaffold protein] + N(6)-[(R)-dihydrolipoyl]-L-lysyl-[protein] + 4 Fe(3+) + 2 hydrogen sulfide + 2 5'-deoxyadenosine + 2 L-methionine + 2 reduced [2Fe-2S]-[ferredoxin]. It functions in the pathway protein modification; protein lipoylation via endogenous pathway; protein N(6)-(lipoyl)lysine from octanoyl-[acyl-carrier-protein]: step 2/2. Functionally, catalyzes the radical-mediated insertion of two sulfur atoms into the C-6 and C-8 positions of the octanoyl moiety bound to the lipoyl domains of lipoate-dependent enzymes, thereby converting the octanoylated domains into lipoylated derivatives. The protein is Lipoyl synthase 2, chloroplastic of Populus trichocarpa (Western balsam poplar).